The chain runs to 328 residues: DNA-directed RNA polymerase subunit alpha (328 aa).

The tract at residues M1–S231 is alpha N-terminal domain (alpha-NTD). The alpha C-terminal domain (alpha-CTD) stretch occupies residues M252–G328.

This sequence belongs to the RNA polymerase alpha chain family. Homodimer. The RNAP catalytic core consists of 2 alpha, 1 beta, 1 beta' and 1 omega subunit. When a sigma factor is associated with the core the holoenzyme is formed, which can initiate transcription.

It carries out the reaction RNA(n) + a ribonucleoside 5'-triphosphate = RNA(n+1) + diphosphate. Its function is as follows. DNA-dependent RNA polymerase catalyzes the transcription of DNA into RNA using the four ribonucleoside triphosphates as substrates. The protein is DNA-directed RNA polymerase subunit alpha of Chlorobium phaeovibrioides (strain DSM 265 / 1930) (Prosthecochloris vibrioformis (strain DSM 265)).